The primary structure comprises 333 residues: Ketol-acid reductoisomerase (NADP(+)) (333 aa).

The KARI N-terminal Rossmann domain occupies 2-182; sequence AKLYYEKDCN…GGARAGVLKT (181 aa). Residues 25-28, Ser-51, Ser-53, and 83-86 each bind NADP(+); these read YGSQ and DEKQ. Residue His-108 is part of the active site. Gly-134 provides a ligand contact to NADP(+). In terms of domain architecture, KARI C-terminal knotted spans 183–328; that stretch reads TFKEETETDL…KELRDMMSWS (146 aa). Residues Asp-191, Glu-195, Glu-227, and Glu-231 each contribute to the Mg(2+) site. Ser-252 lines the substrate pocket.

It belongs to the ketol-acid reductoisomerase family. The cofactor is Mg(2+).

The enzyme catalyses (2R)-2,3-dihydroxy-3-methylbutanoate + NADP(+) = (2S)-2-acetolactate + NADPH + H(+). The catalysed reaction is (2R,3R)-2,3-dihydroxy-3-methylpentanoate + NADP(+) = (S)-2-ethyl-2-hydroxy-3-oxobutanoate + NADPH + H(+). The protein operates within amino-acid biosynthesis; L-isoleucine biosynthesis; L-isoleucine from 2-oxobutanoate: step 2/4. It functions in the pathway amino-acid biosynthesis; L-valine biosynthesis; L-valine from pyruvate: step 2/4. Functionally, involved in the biosynthesis of branched-chain amino acids (BCAA). Catalyzes an alkyl-migration followed by a ketol-acid reduction of (S)-2-acetolactate (S2AL) to yield (R)-2,3-dihydroxy-isovalerate. In the isomerase reaction, S2AL is rearranged via a Mg-dependent methyl migration to produce 3-hydroxy-3-methyl-2-ketobutyrate (HMKB). In the reductase reaction, this 2-ketoacid undergoes a metal-dependent reduction by NADPH to yield (R)-2,3-dihydroxy-isovalerate. This is Ketol-acid reductoisomerase (NADP(+)) from Alkaliphilus metalliredigens (strain QYMF).